A 269-amino-acid chain; its full sequence is Dihydropteroate synthase (269 aa).

The Pterin-binding domain maps to 14–261 (TYIMGILNFT…DVLENSRAAK (248 aa)). N21 provides a ligand contact to Mg(2+). (7,8-dihydropterin-6-yl)methyl diphosphate-binding positions include T61, D95, N114, D178, K214, and 249–251 (RVH).

This sequence belongs to the DHPS family. It depends on Mg(2+) as a cofactor.

It catalyses the reaction (7,8-dihydropterin-6-yl)methyl diphosphate + 4-aminobenzoate = 7,8-dihydropteroate + diphosphate. It functions in the pathway cofactor biosynthesis; tetrahydrofolate biosynthesis; 7,8-dihydrofolate from 2-amino-4-hydroxy-6-hydroxymethyl-7,8-dihydropteridine diphosphate and 4-aminobenzoate: step 1/2. Functionally, catalyzes the condensation of para-aminobenzoate (pABA) with 6-hydroxymethyl-7,8-dihydropterin diphosphate (DHPt-PP) to form 7,8-dihydropteroate (H2Pte), the immediate precursor of folate derivatives. The protein is Dihydropteroate synthase of Clostridium beijerinckii (strain ATCC 51743 / NCIMB 8052) (Clostridium acetobutylicum).